Here is a 740-residue protein sequence, read N- to C-terminus: Elongation factor 2 (740 aa).

The region spanning 23-264 (AQIRNAGTLA…MIIEHVPPPN (242 aa)) is the tr-type G domain. Residues 32 to 39 (AHVDHGKT), 98 to 102 (DTPGH), and 152 to 155 (NKID) each bind GTP. His-605 is modified (diphthamide).

Belongs to the TRAFAC class translation factor GTPase superfamily. Classic translation factor GTPase family. EF-G/EF-2 subfamily.

Its subcellular location is the cytoplasm. In terms of biological role, catalyzes the GTP-dependent ribosomal translocation step during translation elongation. During this step, the ribosome changes from the pre-translocational (PRE) to the post-translocational (POST) state as the newly formed A-site-bound peptidyl-tRNA and P-site-bound deacylated tRNA move to the P and E sites, respectively. Catalyzes the coordinated movement of the two tRNA molecules, the mRNA and conformational changes in the ribosome. This chain is Elongation factor 2, found in Pyrobaculum neutrophilum (strain DSM 2338 / JCM 9278 / NBRC 100436 / V24Sta) (Thermoproteus neutrophilus).